The following is a 216-amino-acid chain: Outer-membrane lipoprotein LolB (216 aa).

The signal sequence occupies residues 1-24; it reads MNNLNYFTKISASCAALALMTLAG. Cys-25 carries the N-palmitoyl cysteine lipid modification. Cys-25 carries S-diacylglycerol cysteine lipidation.

It belongs to the LolB family. In terms of assembly, monomer.

The protein resides in the cell outer membrane. Its function is as follows. Plays a critical role in the incorporation of lipoproteins in the outer membrane after they are released by the LolA protein. The polypeptide is Outer-membrane lipoprotein LolB (Shewanella loihica (strain ATCC BAA-1088 / PV-4)).